We begin with the raw amino-acid sequence, 337 residues long: UDP-glucose 4-epimerase (337 aa).

Residues 11 to 12, 31 to 36, 58 to 59, 80 to 84, Asn99, Ser124, Tyr149, Lys153, and Phe178 each bind NAD(+); these read YI, DNLSNA, DL, and FAGLK. 2 residues coordinate substrate: Ser124 and Tyr149. Residue Tyr149 is the Proton acceptor of the active site. Substrate contacts are provided by residues Asn179, 199–200, 216–218, Arg231, and 292–295; these read NL, GIF, and RDGD.

It belongs to the NAD(P)-dependent epimerase/dehydratase family. Homodimer. NAD(+) is required as a cofactor.

It carries out the reaction UDP-alpha-D-glucose = UDP-alpha-D-galactose. Its pathway is carbohydrate metabolism; galactose metabolism. In terms of biological role, involved in the metabolism of galactose. Catalyzes the conversion of UDP-galactose (UDP-Gal) to UDP-glucose (UDP-Glc) through a mechanism involving the transient reduction of NAD. This Erwinia amylovora (Fire blight bacteria) protein is UDP-glucose 4-epimerase (galE).